The chain runs to 128 residues: Small ribosomal subunit protein uS11 (128 aa).

It belongs to the universal ribosomal protein uS11 family. In terms of assembly, part of the 30S ribosomal subunit. Interacts with proteins S7 and S18. Binds to IF-3.

Located on the platform of the 30S subunit, it bridges several disparate RNA helices of the 16S rRNA. Forms part of the Shine-Dalgarno cleft in the 70S ribosome. In Aster yellows witches'-broom phytoplasma (strain AYWB), this protein is Small ribosomal subunit protein uS11.